The following is a 266-amino-acid chain: Putative carbamate hydrolase RutD (266 aa).

The protein belongs to the AB hydrolase superfamily. Hydrolase RutD family.

The enzyme catalyses carbamate + 2 H(+) = NH4(+) + CO2. Functionally, involved in pyrimidine catabolism. May facilitate the hydrolysis of carbamate, a reaction that can also occur spontaneously. The chain is Putative carbamate hydrolase RutD from Escherichia coli O45:K1 (strain S88 / ExPEC).